A 329-amino-acid polypeptide reads, in one-letter code: Flotillin-like protein FloA (329 aa).

A run of 2 helical transmembrane segments spans residues 4 to 24 (IAFI…FAIV) and 26 to 46 (VGLW…TLIG).

This sequence belongs to the flotillin-like FloA family. Homooligomerizes.

Its subcellular location is the cell membrane. It is found in the membrane raft. Its function is as follows. Found in functional membrane microdomains (FMM) that may be equivalent to eukaryotic membrane rafts. FMMs are highly dynamic and increase in number as cells age. Flotillins are thought to be important factors in membrane fluidity. This is Flotillin-like protein FloA from Acetivibrio thermocellus (strain ATCC 27405 / DSM 1237 / JCM 9322 / NBRC 103400 / NCIMB 10682 / NRRL B-4536 / VPI 7372) (Clostridium thermocellum).